We begin with the raw amino-acid sequence, 375 residues long: Delta(9) fatty acid conjugase-like enzyme (375 aa).

A run of 2 helical transmembrane segments spans residues L38 to V58 and L66 to L86. Residues H94–H98 carry the Histidine box-1 motif. The short motif at H130–H134 is the Histidine box-2 element. 3 helical membrane passes run F168–F188, V219–A239, and G241–F261. The Histidine box-3 motif lies at H307–H311.

Belongs to the fatty acid desaturase type 1 family.

It is found in the membrane. Its function is as follows. Involved in the biosynthesis of dimorphecolic acid (9-OH-18:2(10E,12E)). Catalyzes the formation of the C-9 hydroxyl group and the (E)-delta(10) double bond from the trans-linoleic acid (16:2(9Z,12E)) produced by FAD2-1. Very limited activity with cis-linoleic acid (16:2(9Z,12Z)). The chain is Delta(9) fatty acid conjugase-like enzyme from Dimorphotheca sinuata (African daisy).